A 118-amino-acid polypeptide reads, in one-letter code: Small ribosomal subunit protein uS13 (118 aa).

A disordered region spans residues 92–118; the sequence is RRGHPLRGQRTRTNARTRKGPRKAIRK.

The protein belongs to the universal ribosomal protein uS13 family. As to quaternary structure, part of the 30S ribosomal subunit. Forms a loose heterodimer with protein S19. Forms two bridges to the 50S subunit in the 70S ribosome.

In terms of biological role, located at the top of the head of the 30S subunit, it contacts several helices of the 16S rRNA. In the 70S ribosome it contacts the 23S rRNA (bridge B1a) and protein L5 of the 50S subunit (bridge B1b), connecting the 2 subunits; these bridges are implicated in subunit movement. Contacts the tRNAs in the A and P-sites. In Xanthomonas campestris pv. campestris (strain ATCC 33913 / DSM 3586 / NCPPB 528 / LMG 568 / P 25), this protein is Small ribosomal subunit protein uS13.